A 305-amino-acid polypeptide reads, in one-letter code: Transmembrane epididymal protein 1 (305 aa).

Residues 4 to 24 traverse the membrane as a helical segment; it reads FIGHISPGLFLVFYGLYQAII. The N-linked (GlcNAc...) asparagine glycan is linked to Asn32. Transmembrane regions (helical) follow at residues 51-71, 100-120, 124-144, 159-179, 187-207, and 223-243; these read LWQI…LIVY, LTMF…RSVL, LVLL…LLLV, SLLI…LWAP, IETF…FILF, and IMLV…CMLG. Residues 285–305 form a disordered region; that stretch reads EQQDRDDQAPLLSKSSPCDRA.

It belongs to the TMEM45 family.

It is found in the membrane. The sequence is that of Transmembrane epididymal protein 1 (Teddm1) from Rattus norvegicus (Rat).